The primary structure comprises 360 residues: Photosystem II protein D1 3 (360 aa).

3 consecutive transmembrane segments (helical) span residues 29–46 (YVGW…AATV), 118–133 (HFLI…QWEL), and 142–156 (WICV…SATA). A chlorophyll a-binding site is contributed by His-118. Residue Tyr-126 participates in pheophytin a binding. Residues Asp-170 and Glu-189 each contribute to the [CaMn4O5] cluster site. The helical transmembrane segment at 197–218 (FHMLGVAGVFGGSLFSAMHGSL) threads the bilayer. His-198 contributes to the chlorophyll a binding site. A quinone contacts are provided by residues His-215 and 264 to 265 (SF). His-215 is a Fe cation binding site. Residue His-272 coordinates Fe cation. The chain crosses the membrane as a helical span at residues 274-288 (FLAAWPVIGIWFTAL). [CaMn4O5] cluster contacts are provided by His-332, Glu-333, Asp-342, and Ala-344. Residues 345 to 360 (AGEVAPVALTAPAING) constitute a propeptide that is removed on maturation.

Belongs to the reaction center PufL/M/PsbA/D family. PSII is composed of 1 copy each of membrane proteins PsbA, PsbB, PsbC, PsbD, PsbE, PsbF, PsbH, PsbI, PsbJ, PsbK, PsbL, PsbM, PsbT, PsbX, PsbY, PsbZ, Psb30/Ycf12, peripheral proteins PsbO, CyanoQ (PsbQ), PsbU, PsbV and a large number of cofactors. It forms dimeric complexes. The D1/D2 heterodimer binds P680, chlorophylls that are the primary electron donor of PSII, and subsequent electron acceptors. It shares a non-heme iron and each subunit binds pheophytin, quinone, additional chlorophylls, carotenoids and lipids. D1 provides most of the ligands for the Mn4-Ca-O5 cluster of the oxygen-evolving complex (OEC). There is also a Cl(-1) ion associated with D1 and D2, which is required for oxygen evolution. The PSII complex binds additional chlorophylls, carotenoids and specific lipids. is required as a cofactor. Tyr-161 forms a radical intermediate that is referred to as redox-active TyrZ, YZ or Y-Z. Post-translationally, C-terminally processed by CtpA; processing is essential to allow assembly of the oxygen-evolving complex and thus photosynthetic growth.

It is found in the cellular thylakoid membrane. The catalysed reaction is 2 a plastoquinone + 4 hnu + 2 H2O = 2 a plastoquinol + O2. Its function is as follows. Photosystem II (PSII) is a light-driven water:plastoquinone oxidoreductase that uses light energy to abstract electrons from H(2)O, generating O(2) and a proton gradient subsequently used for ATP formation. It consists of a core antenna complex that captures photons, and an electron transfer chain that converts photonic excitation into a charge separation. The D1/D2 (PsbA/PsbD) reaction center heterodimer binds P680, the primary electron donor of PSII as well as several subsequent electron acceptors. In Trichormus variabilis (strain ATCC 29413 / PCC 7937) (Anabaena variabilis), this protein is Photosystem II protein D1 3.